Here is a 211-residue protein sequence, read N- to C-terminus: Endo-1,4-beta-xylanase 6 (211 aa).

An N-terminal signal peptide occupies residues M1–A16. Positions A19–S210 constitute a GH11 domain. E106 acts as the Nucleophile in catalysis. E197 acts as the Proton donor in catalysis.

It belongs to the glycosyl hydrolase 11 (cellulase G) family.

Its subcellular location is the secreted. It carries out the reaction Endohydrolysis of (1-&gt;4)-beta-D-xylosidic linkages in xylans.. Its pathway is glycan degradation; xylan degradation. In terms of biological role, endo-1,4-beta-xylanase involved in the hydrolysis of xylan, a major structural heterogeneous polysaccharide found in plant biomass representing the second most abundant polysaccharide in the biosphere, after cellulose. The protein is Endo-1,4-beta-xylanase 6 (XYN6) of Aspergillus niger.